A 201-amino-acid chain; its full sequence is Small ribosomal subunit protein uS4c (201 aa).

Residues 15–44 form a disordered region; that stretch reads LGALPGLTNKRPRAGSDLRNQSRSGKKSQY. The S4 RNA-binding domain occupies 89-149; sequence MRLDNILFRL…DEQKSRALIQ (61 aa).

Belongs to the universal ribosomal protein uS4 family. In terms of assembly, part of the 30S ribosomal subunit. Contacts protein S5. The interaction surface between S4 and S5 is involved in control of translational fidelity.

The protein resides in the plastid. It localises to the chloroplast. In terms of biological role, one of the primary rRNA binding proteins, it binds directly to 16S rRNA where it nucleates assembly of the body of the 30S subunit. Functionally, with S5 and S12 plays an important role in translational accuracy. This chain is Small ribosomal subunit protein uS4c (rps4), found in Helianthus annuus (Common sunflower).